A 236-amino-acid polypeptide reads, in one-letter code: UPF0502 protein Bxeno_B1639 (236 aa).

This sequence belongs to the UPF0502 family.

In Paraburkholderia xenovorans (strain LB400), this protein is UPF0502 protein Bxeno_B1639.